The following is a 95-amino-acid chain: Protein TusB (95 aa).

Belongs to the DsrH/TusB family. As to quaternary structure, heterohexamer, formed by a dimer of trimers. The hexameric TusBCD complex contains 2 copies each of TusB, TusC and TusD. The TusBCD complex interacts with TusE.

It localises to the cytoplasm. Its function is as follows. Part of a sulfur-relay system required for 2-thiolation of 5-methylaminomethyl-2-thiouridine (mnm(5)s(2)U) at tRNA wobble positions. This Escherichia fergusonii (strain ATCC 35469 / DSM 13698 / CCUG 18766 / IAM 14443 / JCM 21226 / LMG 7866 / NBRC 102419 / NCTC 12128 / CDC 0568-73) protein is Protein TusB.